The primary structure comprises 314 residues: tRNA pseudouridine synthase B (314 aa).

Histidine 43 lines the substrate pocket. Aspartate 48 serves as the catalytic Nucleophile. 3 residues coordinate substrate: tyrosine 76, tyrosine 179, and leucine 200.

This sequence belongs to the pseudouridine synthase TruB family. Type 1 subfamily.

It carries out the reaction uridine(55) in tRNA = pseudouridine(55) in tRNA. Functionally, responsible for synthesis of pseudouridine from uracil-55 in the psi GC loop of transfer RNAs. This Salmonella paratyphi A (strain ATCC 9150 / SARB42) protein is tRNA pseudouridine synthase B.